The following is a 340-amino-acid chain: MYGLLRNLLFRLPPERAHNVALGSLDVAQKLGILNTFTRQPEPCPVNVMGLEFPNPVGLAAGLDKNADHIDALGALGFGFIEVGTVTPLAQPGNPKPRMFRLPEHQAIINRMGFNNEGLEHLITNVRHRRYRGVLGINVGKNKDTPNEQSEQDYRKGIAAVYPYADYITVNVSSPNTPGLRDLQFGDSLKQLLHAIKEEQAACEQKHGRYVPVAVKIAPDMDEQGIRFVAAALLEAGLDGVIATNTTISREAVKGHVHEQEAGGLSGAPVREASVKVIQGLYAELGDRLPIIGVGGITDGDSAAEKIRAGAKLVQIYTGFIYRGPSLINEAVEAIRKEIS.

Residues 61–65 (AGLDK) and T85 contribute to the FMN site. A substrate-binding site is contributed by K65. 110–114 (NRMGF) is a binding site for substrate. Positions 138 and 171 each coordinate FMN. Position 171 (N171) interacts with substrate. The active-site Nucleophile is the S174. Substrate is bound at residue N176. K216 and T244 together coordinate FMN. 245 to 246 (NT) contributes to the substrate binding site. Residues G267, G296, and 317–318 (YT) each bind FMN.

It belongs to the dihydroorotate dehydrogenase family. Type 2 subfamily. Monomer. Requires FMN as cofactor.

The protein resides in the cell membrane. The catalysed reaction is (S)-dihydroorotate + a quinone = orotate + a quinol. The protein operates within pyrimidine metabolism; UMP biosynthesis via de novo pathway; orotate from (S)-dihydroorotate (quinone route): step 1/1. Catalyzes the conversion of dihydroorotate to orotate with quinone as electron acceptor. In Marinobacter nauticus (strain ATCC 700491 / DSM 11845 / VT8) (Marinobacter aquaeolei), this protein is Dihydroorotate dehydrogenase (quinone).